Here is a 506-residue protein sequence, read N- to C-terminus: Steroid (22S)-hydroxylase (506 aa).

A helical membrane pass occupies residues 12-32; it reads LLFFLPFILLALLTFYTTTVA. C449 contributes to the heme binding site.

The protein belongs to the cytochrome P450 family. The cofactor is heme.

The protein localises to the membrane. It carries out the reaction a C28-steroid + reduced [NADPH--hemoprotein reductase] + O2 = a (22S)-22-hydroxy C28-steroid + oxidized [NADPH--hemoprotein reductase] + H2O + H(+). The enzyme catalyses campesterol + reduced [NADPH--hemoprotein reductase] + O2 = (22S)-22-hydroxycampesterol + oxidized [NADPH--hemoprotein reductase] + H2O + H(+). It catalyses the reaction campestanol + reduced [NADPH--hemoprotein reductase] + O2 = 6-deoxycathasterone + oxidized [NADPH--hemoprotein reductase] + H2O + H(+). It functions in the pathway plant hormone biosynthesis; brassinosteroid biosynthesis. Catalyzes the C22-alpha-hydroxylation step in brassinosteroid biosynthesis, which is the rate-limiting step in this biosynthetic pathway. Catalyzes the conversion of campesterol (CR) to (22S)-22-hydroxycampesterol (22-OHCR, 22-hydroxyCR) and of campestanol (CN) to 6-deoxocathasterone (6-deoxoCT). The polypeptide is Steroid (22S)-hydroxylase (Oryza sativa subsp. indica (Rice)).